The sequence spans 195 residues: Imidazoleglycerol-phosphate dehydratase (195 aa).

It belongs to the imidazoleglycerol-phosphate dehydratase family.

Its subcellular location is the cytoplasm. It carries out the reaction D-erythro-1-(imidazol-4-yl)glycerol 3-phosphate = 3-(imidazol-4-yl)-2-oxopropyl phosphate + H2O. The protein operates within amino-acid biosynthesis; L-histidine biosynthesis; L-histidine from 5-phospho-alpha-D-ribose 1-diphosphate: step 6/9. This is Imidazoleglycerol-phosphate dehydratase from Ruegeria sp. (strain TM1040) (Silicibacter sp.).